Here is a 540-residue protein sequence, read N- to C-terminus: CTP synthase (540 aa).

An amidoligase domain region spans residues 1 to 267 (MTKYIFVTGG…DQKVCDFLHL (267 aa)). Residue Ser-13 participates in CTP binding. Ser-13 serves as a coordination point for UTP. 14-19 (SLGKGI) serves as a coordination point for ATP. Tyr-54 is an L-glutamine binding site. Asp-71 is a binding site for ATP. The Mg(2+) site is built by Asp-71 and Glu-141. CTP is bound by residues 148–150 (DIE), 188–193 (KTKPTQ), and Lys-224. UTP contacts are provided by residues 188–193 (KTKPTQ) and Lys-224. The 244-residue stretch at 294 to 537 (TITLVGKYVE…IGAASGLPAQ (244 aa)) folds into the Glutamine amidotransferase type-1 domain. Gly-356 serves as a coordination point for L-glutamine. The active-site Nucleophile; for glutamine hydrolysis is Cys-383. L-glutamine-binding positions include 384–387 (LGMQ), Glu-407, and Arg-465. Catalysis depends on residues His-510 and Glu-512.

The protein belongs to the CTP synthase family. As to quaternary structure, homotetramer.

It catalyses the reaction UTP + L-glutamine + ATP + H2O = CTP + L-glutamate + ADP + phosphate + 2 H(+). The enzyme catalyses L-glutamine + H2O = L-glutamate + NH4(+). The catalysed reaction is UTP + NH4(+) + ATP = CTP + ADP + phosphate + 2 H(+). The protein operates within pyrimidine metabolism; CTP biosynthesis via de novo pathway; CTP from UDP: step 2/2. Allosterically activated by GTP, when glutamine is the substrate; GTP has no effect on the reaction when ammonia is the substrate. The allosteric effector GTP functions by stabilizing the protein conformation that binds the tetrahedral intermediate(s) formed during glutamine hydrolysis. Inhibited by the product CTP, via allosteric rather than competitive inhibition. Catalyzes the ATP-dependent amination of UTP to CTP with either L-glutamine or ammonia as the source of nitrogen. Regulates intracellular CTP levels through interactions with the four ribonucleotide triphosphates. This Lactobacillus johnsonii (strain CNCM I-12250 / La1 / NCC 533) protein is CTP synthase.